A 318-amino-acid chain; its full sequence is Taste receptor type 2 member 7 (318 aa).

Topologically, residues M1–L9 are extracellular. A helical transmembrane segment spans residues L10 to V30. Over N31 to R55 the chain is Cytoplasmic. A helical transmembrane segment spans residues I56 to Y76. Residues A77–H94 lie on the Extracellular side of the membrane. A helical membrane pass occupies residues L95–F115. The Cytoplasmic segment spans residues H116 to R128. The chain crosses the membrane as a helical span at residues V129–T149. Residues E150–N187 are Extracellular-facing. Residue N167 is glycosylated (N-linked (GlcNAc...) asparagine). Residues L188–L208 traverse the membrane as a helical segment. Residues W209–K235 lie on the Cytoplasmic side of the membrane. A helical transmembrane segment spans residues A236–S256. Residues S257–A266 lie on the Extracellular side of the membrane. A helical transmembrane segment spans residues V267 to L287. The Cytoplasmic portion of the chain corresponds to G288–I318.

The protein belongs to the G-protein coupled receptor T2R family.

It is found in the membrane. Gustducin-coupled receptor implicated in the perception of bitter compounds in the oral cavity and the gastrointestinal tract. Signals through PLCB2 and the calcium-regulated cation channel TRPM5. The protein is Taste receptor type 2 member 7 (TAS2R7) of Macaca mulatta (Rhesus macaque).